The primary structure comprises 219 residues: Ribose-5-phosphate isomerase A (219 aa).

Residues 28 to 31 (TGST), 81 to 84 (DGAD), and 94 to 97 (KGGG) contribute to the substrate site. The active-site Proton acceptor is the Glu-103. Lys-121 contributes to the substrate binding site.

Belongs to the ribose 5-phosphate isomerase family. As to quaternary structure, homodimer.

The enzyme catalyses aldehydo-D-ribose 5-phosphate = D-ribulose 5-phosphate. The protein operates within carbohydrate degradation; pentose phosphate pathway; D-ribose 5-phosphate from D-ribulose 5-phosphate (non-oxidative stage): step 1/1. Its function is as follows. Catalyzes the reversible conversion of ribose-5-phosphate to ribulose 5-phosphate. In Shewanella loihica (strain ATCC BAA-1088 / PV-4), this protein is Ribose-5-phosphate isomerase A.